Here is a 437-residue protein sequence, read N- to C-terminus: Serine carboxypeptidase-like 17 (437 aa).

The first 26 residues, 1-26 (MGKECYYLSWILKFHLLLVLIQLVDS), serve as a signal peptide directing secretion. Intrachain disulfides connect C85–C327, C249–C263, and C287–C293. N106 is a glycosylation site (N-linked (GlcNAc...) asparagine). S181 is an active-site residue. Residue D362 is part of the active site. N378 is a glycosylation site (N-linked (GlcNAc...) asparagine). H415 is a catalytic residue.

The protein belongs to the peptidase S10 family. As to expression, expressed in seedlings and siliques.

It localises to the secreted. In terms of biological role, probable carboxypeptidase. The sequence is that of Serine carboxypeptidase-like 17 (SCPL17) from Arabidopsis thaliana (Mouse-ear cress).